A 128-amino-acid polypeptide reads, in one-letter code: Large ribosomal subunit protein bL20c (128 aa).

This sequence belongs to the bacterial ribosomal protein bL20 family.

Its subcellular location is the plastid. Its function is as follows. Binds directly to 23S ribosomal RNA and is necessary for the in vitro assembly process of the 50S ribosomal subunit. It is not involved in the protein synthesizing functions of that subunit. The sequence is that of Large ribosomal subunit protein bL20c (rpl20) from Epifagus virginiana (Beechdrops).